Consider the following 177-residue polypeptide: Glutathione peroxidase homolog (177 aa).

The active site involves Cys35.

The protein belongs to the glutathione peroxidase family.

Important in the cellular metabolism or defense processes particular to this pathogen. This is Glutathione peroxidase homolog (gpxA) from Neisseria meningitidis serogroup A / serotype 4A (strain DSM 15465 / Z2491).